The primary structure comprises 145 residues: Large ribosomal subunit protein uL13 (145 aa).

Belongs to the universal ribosomal protein uL13 family. As to quaternary structure, part of the 50S ribosomal subunit.

Its function is as follows. This protein is one of the early assembly proteins of the 50S ribosomal subunit, although it is not seen to bind rRNA by itself. It is important during the early stages of 50S assembly. The polypeptide is Large ribosomal subunit protein uL13 (Listeria monocytogenes serotype 4b (strain CLIP80459)).